Reading from the N-terminus, the 1377-residue chain is DNA-directed RNA polymerase subunit beta' (1377 aa).

Residues Cys60, Cys62, Cys75, and Cys78 each contribute to the Zn(2+) site. Mg(2+)-binding residues include Asp449, Asp451, and Asp453. 4 residues coordinate Zn(2+): Cys777, Cys851, Cys858, and Cys861.

The protein belongs to the RNA polymerase beta' chain family. The RNAP catalytic core consists of 2 alpha, 1 beta, 1 beta' and 1 omega subunit. When a sigma factor is associated with the core the holoenzyme is formed, which can initiate transcription. Requires Mg(2+) as cofactor. It depends on Zn(2+) as a cofactor.

The catalysed reaction is RNA(n) + a ribonucleoside 5'-triphosphate = RNA(n+1) + diphosphate. DNA-dependent RNA polymerase catalyzes the transcription of DNA into RNA using the four ribonucleoside triphosphates as substrates. The protein is DNA-directed RNA polymerase subunit beta' of Borrelia hermsii (strain HS1 / DAH).